The following is a 441-amino-acid chain: Ribulose bisphosphate carboxylase large chain (441 aa).

K5 carries the N6,N6,N6-trimethyllysine modification. Substrate is bound by residues N114 and T164. The active-site Proton acceptor is the K166. K168 contacts substrate. Mg(2+) contacts are provided by K192, D194, and E195. K192 bears the N6-carboxylysine mark. The Proton acceptor role is filled by H285. 3 residues coordinate substrate: R286, H318, and S370.

This sequence belongs to the RuBisCO large chain family. Type I subfamily. As to quaternary structure, heterohexadecamer of 8 large chains and 8 small chains; disulfide-linked. The disulfide link is formed within the large subunit homodimers. The cofactor is Mg(2+). Post-translationally, the disulfide bond which can form in the large chain dimeric partners within the hexadecamer appears to be associated with oxidative stress and protein turnover.

The protein resides in the plastid. It is found in the chloroplast. The enzyme catalyses 2 (2R)-3-phosphoglycerate + 2 H(+) = D-ribulose 1,5-bisphosphate + CO2 + H2O. It catalyses the reaction D-ribulose 1,5-bisphosphate + O2 = 2-phosphoglycolate + (2R)-3-phosphoglycerate + 2 H(+). RuBisCO catalyzes two reactions: the carboxylation of D-ribulose 1,5-bisphosphate, the primary event in carbon dioxide fixation, as well as the oxidative fragmentation of the pentose substrate in the photorespiration process. Both reactions occur simultaneously and in competition at the same active site. The polypeptide is Ribulose bisphosphate carboxylase large chain (Drosera petiolaris (Woolly sundew)).